A 243-amino-acid chain; its full sequence is Pyridoxine 5'-phosphate synthase (243 aa).

A 3-amino-2-oxopropyl phosphate-binding site is contributed by asparagine 9. 11-12 (DH) contacts 1-deoxy-D-xylulose 5-phosphate. Arginine 20 is a 3-amino-2-oxopropyl phosphate binding site. Histidine 45 (proton acceptor) is an active-site residue. 2 residues coordinate 1-deoxy-D-xylulose 5-phosphate: arginine 47 and histidine 52. The active-site Proton acceptor is the glutamate 72. Residue threonine 102 coordinates 1-deoxy-D-xylulose 5-phosphate. Catalysis depends on histidine 193, which acts as the Proton donor. 3-amino-2-oxopropyl phosphate is bound by residues glycine 194 and 215 to 216 (GH).

This sequence belongs to the PNP synthase family. In terms of assembly, homooctamer; tetramer of dimers.

Its subcellular location is the cytoplasm. It carries out the reaction 3-amino-2-oxopropyl phosphate + 1-deoxy-D-xylulose 5-phosphate = pyridoxine 5'-phosphate + phosphate + 2 H2O + H(+). Its pathway is cofactor biosynthesis; pyridoxine 5'-phosphate biosynthesis; pyridoxine 5'-phosphate from D-erythrose 4-phosphate: step 5/5. In terms of biological role, catalyzes the complicated ring closure reaction between the two acyclic compounds 1-deoxy-D-xylulose-5-phosphate (DXP) and 3-amino-2-oxopropyl phosphate (1-amino-acetone-3-phosphate or AAP) to form pyridoxine 5'-phosphate (PNP) and inorganic phosphate. This Yersinia pestis protein is Pyridoxine 5'-phosphate synthase.